Reading from the N-terminus, the 144-residue chain is MAVRIKLTRLGKIRNPQYRVVVADARTRRDGRAIESIGKYHPKEEPSLIEIDSERVQYWLSVGAQPTEPVQRLLEITGDWQKFKGLPGAEGTLKVKAAKPSKLDLFNAALAAAENEPVAEAVTPKKKAKKDDAAAESTEAEAAE.

The tract at residues 115–144 (NEPVAEAVTPKKKAKKDDAAAESTEAEAAE) is disordered.

Belongs to the bacterial ribosomal protein bS16 family.

The protein is Small ribosomal subunit protein bS16 of Nocardia farcinica (strain IFM 10152).